The primary structure comprises 234 residues: Putative N-acetylmannosamine-6-phosphate 2-epimerase (234 aa).

It belongs to the NanE family.

The enzyme catalyses an N-acyl-D-glucosamine 6-phosphate = an N-acyl-D-mannosamine 6-phosphate. It participates in amino-sugar metabolism; N-acetylneuraminate degradation; D-fructose 6-phosphate from N-acetylneuraminate: step 3/5. Its function is as follows. Converts N-acetylmannosamine-6-phosphate (ManNAc-6-P) to N-acetylglucosamine-6-phosphate (GlcNAc-6-P). The polypeptide is Putative N-acetylmannosamine-6-phosphate 2-epimerase (Klebsiella pneumoniae (strain 342)).